The chain runs to 318 residues: Trans-prenyltransferase (318 aa).

The chain crosses the membrane as a helical span at residues 1-21; that stretch reads MLHLIYISIIVVLIIILISYT. Positions 85, 88, and 122 each coordinate isopentenyl diphosphate. The Mg(2+) site is built by Asp-129 and Asp-135. Arg-140 is a dimethylallyl diphosphate binding site. An isopentenyl diphosphate-binding site is contributed by Arg-141. Dimethylallyl diphosphate contacts are provided by Lys-216, Thr-217, and Gln-254.

The protein belongs to the FPP/GGPP synthase family. Asfivirus trans-prenyltransferase subfamily. Requires Mg(2+) as cofactor.

It is found in the host endoplasmic reticulum. The protein localises to the host membrane. It catalyses the reaction isopentenyl diphosphate + dimethylallyl diphosphate = (2E)-geranyl diphosphate + diphosphate. The enzyme catalyses isopentenyl diphosphate + (2E)-geranyl diphosphate = (2E,6E)-farnesyl diphosphate + diphosphate. It carries out the reaction isopentenyl diphosphate + (2E,6E)-farnesyl diphosphate = (2E,6E,10E)-geranylgeranyl diphosphate + diphosphate. The catalysed reaction is isopentenyl diphosphate + (2E,6E,10E)-geranylgeranyl diphosphate = (2E,6E,10E,14E)-geranylfarnesyl diphosphate + diphosphate. The protein operates within isoprenoid biosynthesis; farnesyl diphosphate biosynthesis; farnesyl diphosphate from geranyl diphosphate and isopentenyl diphosphate: step 1/1. It participates in isoprenoid biosynthesis; geranyl diphosphate biosynthesis; geranyl diphosphate from dimethylallyl diphosphate and isopentenyl diphosphate: step 1/1. It functions in the pathway isoprenoid biosynthesis; geranylgeranyl diphosphate biosynthesis; geranylgeranyl diphosphate from farnesyl diphosphate and isopentenyl diphosphate: step 1/1. Trans-prenyltransferase that catalyzes the sequential condensation of isopentenyl diphosphate (IPP) with different allylic diphosphates, such as dimethylallyl diphosphate (DMAPP), geranyl diphosphate (GPP), farnesyl diphosphate (FPP) and geranylgeranyl diphosphate (GGPP), farnesyl diphosphate being the best allylic substrate. This chain is Trans-prenyltransferase, found in African swine fever virus (isolate Warthog/Namibia/Wart80/1980) (ASFV).